Reading from the N-terminus, the 187-residue chain is PsbQ-like protein 3, chloroplastic (187 aa).

The N-terminal 32 residues, 1–32, are a transit peptide targeting the chloroplast; that stretch reads MAISKPPPLHFTFFHNQDSSIDTSDSNLALSI. A thylakoid-targeting transit peptide spans 33–60; the sequence is DTSRRRRDVLLTISGTLIPQLFFFDRKR.

Belongs to the PsbQ family. Subunit of the lumenal protuberance of the NDH complex.

The protein resides in the plastid. The protein localises to the chloroplast thylakoid membrane. Required for both formation and activity of the chloroplast NAD(P)H dehydrogenase (NDH) complex. The chain is PsbQ-like protein 3, chloroplastic (PQL3) from Arabidopsis thaliana (Mouse-ear cress).